A 151-amino-acid polypeptide reads, in one-letter code: Aspartate carbamoyltransferase regulatory chain (151 aa).

Residues C108, C113, C138, and C141 each coordinate Zn(2+).

It belongs to the PyrI family. Contains catalytic and regulatory chains. Zn(2+) is required as a cofactor.

Involved in allosteric regulation of aspartate carbamoyltransferase. The sequence is that of Aspartate carbamoyltransferase regulatory chain from Pyrobaculum neutrophilum (strain DSM 2338 / JCM 9278 / NBRC 100436 / V24Sta) (Thermoproteus neutrophilus).